The following is a 185-amino-acid chain: Large ribosomal subunit protein uL5 (185 aa).

Belongs to the universal ribosomal protein uL5 family. In terms of assembly, part of the 50S ribosomal subunit; part of the 5S rRNA/L5/L18/L25 subcomplex. Contacts the 5S rRNA and the P site tRNA. Forms a bridge to the 30S subunit in the 70S ribosome.

This is one of the proteins that bind and probably mediate the attachment of the 5S RNA into the large ribosomal subunit, where it forms part of the central protuberance. In the 70S ribosome it contacts protein S13 of the 30S subunit (bridge B1b), connecting the 2 subunits; this bridge is implicated in subunit movement. Contacts the P site tRNA; the 5S rRNA and some of its associated proteins might help stabilize positioning of ribosome-bound tRNAs. In Rhizobium etli (strain ATCC 51251 / DSM 11541 / JCM 21823 / NBRC 15573 / CFN 42), this protein is Large ribosomal subunit protein uL5.